We begin with the raw amino-acid sequence, 201 residues long: Sterile alpha motif domain-containing protein 12 (201 aa).

The 67-residue stretch at 77 to 143 folds into the SAM domain; it reads WTQQDVCKWL…LQQVLQLKVR (67 aa).

The chain is Sterile alpha motif domain-containing protein 12 (SAMD12) from Pongo abelii (Sumatran orangutan).